The following is a 313-amino-acid chain: Olfactory receptor 1M1 (313 aa).

At 1–25 the chain is on the extracellular side; sequence MEPRNQTSASQFILLGLSEKPEQET. Asn-5 carries N-linked (GlcNAc...) asparagine glycosylation. The helical transmembrane segment at 26-49 threads the bilayer; the sequence is LLFSLFFCMYLVMVVGNLLIILAI. The Cytoplasmic segment spans residues 50 to 57; it reads SIDSHLHT. The chain crosses the membrane as a helical span at residues 58–79; the sequence is PMYFFLANLSLVDFCLATNTIP. Topologically, residues 80–100 are extracellular; it reads KMLVSLQTGSKAISYPCCLIQ. Cys-97 and Cys-189 form a disulfide bridge. A helical transmembrane segment spans residues 101 to 120; it reads MYFFHFFGIVDSVIIAMMAY. Topologically, residues 121-139 are cytoplasmic; that stretch reads DRFVAICHPLHYAKIMSLR. Residues 140–158 traverse the membrane as a helical segment; it reads LCRLLVGALWAFSCFISLT. At 159–196 the chain is on the extracellular side; the sequence is HILLMARLVFCGSHEVPHYFCDLTPILRLSCTDTSVNR. A helical membrane pass occupies residues 197 to 219; sequence IFILIVAGMVIATPFVCILASYA. Topologically, residues 220–236 are cytoplasmic; that stretch reads RILVAIMKVPSAGGRKK. The chain crosses the membrane as a helical span at residues 237-259; the sequence is AFSTCSSHLSVVALFYGTTIGVY. Over 260–272 the chain is Extracellular; sequence LCPSSVLTTVKEK. A helical membrane pass occupies residues 273 to 292; the sequence is ASAVMYTAVTPMLNPFIYSL. Topologically, residues 293–313 are cytoplasmic; sequence RNRDLKGALRKLVNRKITSSS.

The protein belongs to the G-protein coupled receptor 1 family.

Its subcellular location is the cell membrane. Its function is as follows. Odorant receptor. This chain is Olfactory receptor 1M1, found in Homo sapiens (Human).